The following is an 80-amino-acid chain: Beta-toxin KAaH2 (80 aa).

Positions 1 to 22 (MMKLMLFSIIVILFSLIGSIHG) are cleaved as a signal peptide. The LCN-type CS-alpha/beta domain occupies 25–80 (VPGNYPLDSSDDTYLCAPLGENPSCIQICRKHGVKYGYCYAFQCWCEYLEDKNVKI). 3 disulfides stabilise this stretch: Cys-40/Cys-63, Cys-49/Cys-68, and Cys-53/Cys-70.

It belongs to the long (3 C-C) scorpion toxin superfamily. Sodium/Potassium channel inhibitor family. In terms of tissue distribution, expressed by the venom gland.

The protein localises to the secreted. In terms of biological role, weakly inhibits the vertebrate potassium channel Kv1.1/KCNA1. This is Beta-toxin KAaH2 from Androctonus australis (Sahara scorpion).